Consider the following 479-residue polypeptide: Phosphatidylinositol 4-kinase type 2-beta (479 aa).

Residues 1–10 (MESGSEEPDE) show a composition bias toward acidic residues. A disordered region spans residues 1–91 (MESGSEEPDE…PRVGAGHTGH (91 aa)). Residues 18 to 34 (PALHAGPPAGRAAPGGA) show a composition bias toward low complexity. Positions 42 to 62 (GLEEEEEGEEDSGPEGDGEEE) are enriched in acidic residues. Positions 118–449 (GVLPERISQG…VQMPRVIVER (332 aa)) constitute a PI3K/PI4K catalytic domain. The G-loop stretch occupies residues 124–130 (ISQGSSG). Residues S131 and K146 each coordinate ATP. An important for substrate binding region spans residues 151–153 (EPY). An important for interaction with membranes region spans residues 159-172 (KWTKYFHKICCPCC). Residues 255 to 258 (QLFV) and 269 to 270 (RK) contribute to the ATP site. An important for interaction with membranes region spans residues 262–270 (KEADYWLRK). The interval 299–307 (RNTDRGNDN) is catalytic loop. The interval 340–360 (AIDNGLAFPFKHPDEWRAYPF) is activation loop. D342 is an ATP binding site. The tract at residues 355–364 (WRAYPFHWAW) is important for interaction with membranes.

This sequence belongs to the PI3/PI4-kinase family. Type II PI4K subfamily.

The protein resides in the cytoplasm. Its subcellular location is the cytosol. It localises to the golgi apparatus membrane. It is found in the endoplasmic reticulum membrane. The protein localises to the cell membrane. The protein resides in the early endosome membrane. The enzyme catalyses a 1,2-diacyl-sn-glycero-3-phospho-(1D-myo-inositol) + ATP = a 1,2-diacyl-sn-glycero-3-phospho-(1D-myo-inositol 4-phosphate) + ADP + H(+). Its function is as follows. Contributes to the overall PI4-kinase activity of the cell. This contribution may be especially significant in plasma membrane, endosomal and Golgi compartments. The phosphorylation of phosphatidylinositol (PI) to PI4P is the first committed step in the generation of phosphatidylinositol 4,5-bisphosphate (PIP2), a precursor of the second messenger inositol 1,4,5-trisphosphate (InsP3). The polypeptide is Phosphatidylinositol 4-kinase type 2-beta (PI4K2B) (Gallus gallus (Chicken)).